The chain runs to 325 residues: Reaction center protein M chain (325 aa).

The next 3 membrane-spanning stretches (helical) occupy residues 53–79 (LGFTGTLSIIFGFMAIFIIGFNMLASV), 111–140 (EGGWWLMAGFFLTMSILLWWVRTYKRAEAL), and 143–168 (SQHLSWAFAAAIFFYLSLGFIRPVMM). (7R,8Z)-bacteriochlorophyll b contacts are provided by His-182 and His-202. Residues 198 to 226 (YNPFHMLSIAFLYGSALLFAMHGATILAV) form a helical membrane-spanning segment. Residues His-219 and Glu-234 each coordinate Fe cation. Trp-252 is a binding site for a ubiquinone. His-266 contributes to the Fe cation binding site.

Belongs to the reaction center PufL/M/PsbA/D family. In terms of assembly, reaction center is composed of four bacteriochlorophylls, two bacteriopheophytins, two ubiquinones, one iron, and two highly hydrophobic polypeptide chains (designated L and M).

The protein localises to the cellular chromatophore membrane. In terms of biological role, the reaction center is a membrane-bound complex that mediates the initial photochemical event in the electron transfer process of photosynthesis. The sequence is that of Reaction center protein M chain (pufM) from Allochromatium vinosum (strain ATCC 17899 / DSM 180 / NBRC 103801 / NCIMB 10441 / D) (Chromatium vinosum).